The chain runs to 164 residues: ATP synthase B' chain, cyanelle (164 aa).

The chain crosses the membrane as a helical span at residues 26-46 (ATLPVMMVQLLVLMLILNAVF).

This sequence belongs to the ATPase B chain family. In terms of assembly, F-type ATPases have 2 components, F(1) - the catalytic core - and F(0) - the membrane proton channel. F(1) has five subunits: alpha(3), beta(3), gamma(1), delta(1), epsilon(1). F(0) has four main subunits: a(1), b(1), b'(1) and c(10-14). The alpha and beta chains form an alternating ring which encloses part of the gamma chain. F(1) is attached to F(0) by a central stalk formed by the gamma and epsilon chains, while a peripheral stalk is formed by the delta, b and b' chains.

The protein resides in the plastid. It is found in the cyanelle thylakoid membrane. Functionally, f(1)F(0) ATP synthase produces ATP from ADP in the presence of a proton or sodium gradient. F-type ATPases consist of two structural domains, F(1) containing the extramembraneous catalytic core and F(0) containing the membrane proton channel, linked together by a central stalk and a peripheral stalk. During catalysis, ATP synthesis in the catalytic domain of F(1) is coupled via a rotary mechanism of the central stalk subunits to proton translocation. Component of the F(0) channel, it forms part of the peripheral stalk, linking F(1) to F(0). The b'-subunit is a diverged and duplicated form of b found in plants and photosynthetic bacteria. The polypeptide is ATP synthase B' chain, cyanelle (Cyanophora paradoxa).